A 101-amino-acid polypeptide reads, in one-letter code: Putative pterin-4-alpha-carbinolamine dehydratase (101 aa).

Belongs to the pterin-4-alpha-carbinolamine dehydratase family.

It catalyses the reaction (4aS,6R)-4a-hydroxy-L-erythro-5,6,7,8-tetrahydrobiopterin = (6R)-L-erythro-6,7-dihydrobiopterin + H2O. This chain is Putative pterin-4-alpha-carbinolamine dehydratase, found in Nitrobacter winogradskyi (strain ATCC 25391 / DSM 10237 / CIP 104748 / NCIMB 11846 / Nb-255).